The primary structure comprises 424 residues: STAM-binding protein (424 aa).

The interval 1–127 (MSDHGDVSLP…YTEYNEEKKK (127 aa)) is interaction with CHMP3. Phosphoserine occurs at positions 2 and 48. The interaction with STAM stretch occupies residues 227–231 (PAKPP). A phosphoserine mark is found at serine 243, serine 245, and serine 247. The MPN domain maps to 257–388 (VVVPGRLCPQ…LTDHGLEEIS (132 aa)). Zn(2+) is bound by residues histidine 335, histidine 337, aspartate 348, histidine 350, cysteine 390, histidine 396, and histidine 398. The JAMM motif signature appears at 335 to 348 (HTHPTQTAFLSSVD).

Belongs to the peptidase M67C family. In terms of assembly, interacts with STAM. Interacts with SMAD6 and SMAD7. Interacts with CHMP3; the interaction appears to relieve the autoinhibition of CHMP3. Interacts with SMURF2 and RNF11; this interaction promotes ubiquitination. It depends on Zn(2+) as a cofactor. Post-translationally, phosphorylated after BMP type I receptor activation. Ubiquitinated by SMURF2 in the presence of RNF11. As to expression, ubiquitously expressed.

It localises to the nucleus. Its subcellular location is the membrane. It is found in the cytoplasm. The protein resides in the early endosome. Inhibited by N-ethylmaleimide. Strongly and specifically inhibited by ubiquitin variants UbV(SP.2) and UbV(SP.3). Also inhibited by UbV(SP.1); an ubiquitin variant that also inhibits STAMBPL1. Functionally, zinc metalloprotease that specifically cleaves 'Lys-63'-linked polyubiquitin chains. Does not cleave 'Lys-48'-linked polyubiquitin chains. Plays a role in signal transduction for cell growth and MYC induction mediated by IL-2 and GM-CSF. Potentiates BMP (bone morphogenetic protein) signaling by antagonizing the inhibitory action of SMAD6 and SMAD7. Has a key role in regulation of cell surface receptor-mediated endocytosis and ubiquitin-dependent sorting of receptors to lysosomes. Endosomal localization of STAMBP is required for efficient EGFR degradation but not for its internalization. Involved in the negative regulation of PI3K-AKT-mTOR and RAS-MAP signaling pathways. This is STAM-binding protein (STAMBP) from Homo sapiens (Human).